Consider the following 916-residue polypeptide: MTDETVKSLAEEIQTPVERLVQQFADAGIKKTVSDSVSQKEKETLLAWLNRDKESTSQPEKLTLQRKVRSTLSVPGTGGKNKSVAIEVRKKRTYVNRDAVEKAQAAEQAQREAEEKARREAEEKAQREAQEKAQREAEEKAKREAEEAKKKAEEKAKREAEEAKREAAELAKREAAEKDKVKQNEKPKADKADQEKARRIAEQAELKRKTEEAQRRKAEEEARIAAEKARRLAEENAEKWTSDTSSETEGTDYHVTTSRYARDAEDESDAEVEGGRGRGRAAKAPRPKKNNRHSEKADREEARAAGRSNKKGKGRKNSTLQQGFNKPAAAVNRDVVIGETISVADLANKMAVKGSEVIKTMMKMGAMATINQVLDQETAQLVAEEMGHKVILRRENELEEQVMNDRDTSDEMAVSRAPVVTIMGHVDHGKTSLLDYIRSTKVASGEAGGITQHIGAYHVKTDKGEITFLDTPGHAAFTSMRARGAQVTDIVVLVVAADDGVMPQTIEAIQHAKAANVPVVVAVNKIDKPEADPDRVKTELSQYGILPEDWGGETQFIHVSAKQGLGIDELLDAILLQAEVLELKAVKEGMASGVVIESYLDKGRGPVATILVREGTLNKGDIVLCGFEYGRIRAMRNELGKEVQSAGPSMPVEILGLSNVPSAGDEATVVRDEKKAREVALYRQGKFREVKLARQQKSKLENMFANMEEGKVSELNIVLKTDVQGTCEAITDALVKLSTDEVKLKIIGSGVGGITETDATLAAASDAIILGFNVRADASARRIIEQESVDLRYYSVIYSLIDEIKSAMSGMLEPEYKQEIMGLAEVRDVFKSPKFGAIAGCMVVEGNIKRNNPIRVLRDNVVIYEGELESLRRFKDDVNEVRNGMECGIGVKNYNDVRVGDMIEVFQVIEIKRSID.

The interval 50–326 is disordered; that stretch reads NRDKESTSQP…NSTLQQGFNK (277 aa). Over residues 109–241 the composition is skewed to basic and acidic residues; sequence AQREAEEKAR…LAEENAEKWT (133 aa). Positions 277-291 are enriched in basic residues; sequence GRGRAAKAPRPKKNN. Positions 292-304 are enriched in basic and acidic residues; sequence RHSEKADREEARA. The tr-type G domain occupies 415 to 584; the sequence is SRAPVVTIMG…LLQAEVLELK (170 aa). Residues 424-431 form a G1 region; the sequence is GHVDHGKT. 424–431 contributes to the GTP binding site; it reads GHVDHGKT. The interval 449–453 is G2; it reads GITQH. The G3 stretch occupies residues 470 to 473; that stretch reads DTPG. GTP-binding positions include 470–474 and 524–527; these read DTPGH and NKID. A G4 region spans residues 524-527; it reads NKID. The G5 stretch occupies residues 560 to 562; it reads SAK.

Belongs to the TRAFAC class translation factor GTPase superfamily. Classic translation factor GTPase family. IF-2 subfamily.

It localises to the cytoplasm. Functionally, one of the essential components for the initiation of protein synthesis. Protects formylmethionyl-tRNA from spontaneous hydrolysis and promotes its binding to the 30S ribosomal subunits. Also involved in the hydrolysis of GTP during the formation of the 70S ribosomal complex. This Proteus mirabilis (strain HI4320) protein is Translation initiation factor IF-2.